A 469-amino-acid chain; its full sequence is 3-isopropylmalate dehydratase large subunit (469 aa).

3 residues coordinate [4Fe-4S] cluster: cysteine 349, cysteine 410, and cysteine 413.

It belongs to the aconitase/IPM isomerase family. LeuC type 1 subfamily. Heterodimer of LeuC and LeuD. [4Fe-4S] cluster is required as a cofactor.

The enzyme catalyses (2R,3S)-3-isopropylmalate = (2S)-2-isopropylmalate. It functions in the pathway amino-acid biosynthesis; L-leucine biosynthesis; L-leucine from 3-methyl-2-oxobutanoate: step 2/4. In terms of biological role, catalyzes the isomerization between 2-isopropylmalate and 3-isopropylmalate, via the formation of 2-isopropylmaleate. This chain is 3-isopropylmalate dehydratase large subunit, found in Neisseria meningitidis serogroup C / serotype 2a (strain ATCC 700532 / DSM 15464 / FAM18).